The chain runs to 260 residues: Potassium inward rectifier (Kir)-like channel 3 (260 aa).

The interval 1–34 (MPMTPSEFKNRLLFGSLPRSSSDPTDLQFTEPNV) is disordered. Residues 1 to 68 (MPMTPSEFKN…EQSVSKSIAR (68 aa)) lie on the Cytoplasmic side of the membrane. Residues 18 to 31 (PRSSSDPTDLQFTE) are compositionally biased toward polar residues. The chain crosses the membrane as a helical span at residues 69–89 (QALALLVVYLSLGVLIYWLTL). Positions 127–146 (DSFCFSVMMVTTVGFGDRAF) form an intramembrane region, pore-forming. A helical transmembrane segment spans residues 153-173 (FLAAVWLLVSTLAVARAFLFL). Residues 174–260 (ADARADKRNR…LVDLTTATSV (87 aa)) lie on the Cytoplasmic side of the membrane. EF-hand domains are found at residues 190 to 225 (LGES…QMEK) and 229 to 256 (EDFI…DLTT). Positions 203, 205, 207, 209, 214, 242, 246, 248, and 253 each coordinate Ca(2+).

This sequence belongs to the two pore domain potassium channel (TC 1.A.1.7) family. As to quaternary structure, homotetramer. In terms of tissue distribution, expressed in hydathodes and the vascular tissues of roots, stems, leaves and flowers.

It localises to the vacuole membrane. Its function is as follows. Probable calcium-activated potassium channel. In Arabidopsis thaliana (Mouse-ear cress), this protein is Potassium inward rectifier (Kir)-like channel 3 (KCO3).